An 89-amino-acid chain; its full sequence is MSLDTAEKQKLIENHQVHPTDTGSAEVQVAMLSKRISKLSDHLQGNIHDFASRQGLLKMIGKRKRLLSYLKDKNVQKYQELVKKIGIRG.

The segment covering 1-18 has biased composition (basic and acidic residues); that stretch reads MSLDTAEKQKLIENHQVH. The disordered stretch occupies residues 1–23; sequence MSLDTAEKQKLIENHQVHPTDTG.

This sequence belongs to the universal ribosomal protein uS15 family. As to quaternary structure, part of the 30S ribosomal subunit. Forms a bridge to the 50S subunit in the 70S ribosome, contacting the 23S rRNA.

One of the primary rRNA binding proteins, it binds directly to 16S rRNA where it helps nucleate assembly of the platform of the 30S subunit by binding and bridging several RNA helices of the 16S rRNA. Its function is as follows. Forms an intersubunit bridge (bridge B4) with the 23S rRNA of the 50S subunit in the ribosome. In Prochlorococcus marinus (strain MIT 9301), this protein is Small ribosomal subunit protein uS15.